The chain runs to 648 residues: Interferon-induced GTP-binding protein Mx1 (648 aa).

An N-acetylmethionine modification is found at M1. Residues 1–26 form a disordered region; sequence MVHSDLGIEELDSPESSLNGSEDMES. In terms of domain architecture, Dynamin-type G spans 56–329; it reads DLALPAIAVI…LIMHICKTLP (274 aa). The G1 motif stretch occupies residues 66–73; it reads GDQSSGKS. Residue 66-73 participates in GTP binding; that stretch reads GDQSSGKS. The G2 motif stretch occupies residues 91–93; sequence VTR. The tract at residues 167-170 is G3 motif; that stretch reads DLPG. Residues 167–171 and 236–239 each bind GTP; these read DLPGI and TKPD. Residues 236 to 239 form a G4 motif region; sequence TKPD. The interval 268–271 is G5 motif; that stretch reads KCRG. The interval 330–355 is bundle signaling element (BSE); that stretch reads LLENQIKETHQRITEELQKYGKDIPE. The interval 355–522 is middle domain; the sequence is EEESEKMFCL…HFQMEQLVYC (168 aa). The tract at residues 356-618 is stalk; sequence EESEKMFCLI…KDQYDWLLKE (263 aa). Positions 543-546 are critical for lipid-binding; that stretch reads KNKK. The 89-residue stretch at 560 to 648 folds into the GED domain; it reads TDEIFQHLTA…ARQRLAKFPG (89 aa).

It belongs to the TRAFAC class dynamin-like GTPase superfamily. Dynamin/Fzo/YdjA family. As to quaternary structure, homooligomer. Oligomerizes into multimeric filamentous or ring-like structures by virtue of its stalk domain. Oligomerization is critical for GTPase activity, protein stability, and recognition of viral target structures. Interacts with TRPC1, TRPC3, TRPC4, TRPC5, TRPC6 and TRPC7. Interacts with HSPA5. Interacts with TUBB/TUBB5. Interacts with DDX39A and DDX39B. In terms of processing, ISGylated. As to expression, ubiquitously expressed.

It localises to the cytoplasm. The protein localises to the endoplasmic reticulum membrane. The protein resides in the perinuclear region. Its subcellular location is the nucleus. Functionally, interferon-induced dynamin-like GTPase with antiviral activity against rabies virus (RABV), vesicular stomatitis virus (VSV) and murine pneumonia virus (MPV). Isoform 1 but not isoform 2 shows antiviral activity against vesicular stomatitis virus (VSV). The chain is Interferon-induced GTP-binding protein Mx1 (MX1) from Bos taurus (Bovine).